Reading from the N-terminus, the 157-residue chain is Endoribonuclease YbeY (157 aa).

Zn(2+) contacts are provided by His-114, His-118, and His-124.

The protein belongs to the endoribonuclease YbeY family. Requires Zn(2+) as cofactor.

It localises to the cytoplasm. Its function is as follows. Single strand-specific metallo-endoribonuclease involved in late-stage 70S ribosome quality control and in maturation of the 3' terminus of the 16S rRNA. The protein is Endoribonuclease YbeY of Serratia proteamaculans (strain 568).